The primary structure comprises 421 residues: Serine--tRNA ligase (421 aa).

Residue 230–232 coordinates L-serine; it reads TAE. Position 261-263 (261-263) interacts with ATP; that stretch reads RRE. Glu284 provides a ligand contact to L-serine. 348-351 provides a ligand contact to ATP; that stretch reads EISS. Position 383 (Ser383) interacts with L-serine.

This sequence belongs to the class-II aminoacyl-tRNA synthetase family. Type-1 seryl-tRNA synthetase subfamily. Homodimer. The tRNA molecule binds across the dimer.

The protein localises to the cytoplasm. It carries out the reaction tRNA(Ser) + L-serine + ATP = L-seryl-tRNA(Ser) + AMP + diphosphate + H(+). The catalysed reaction is tRNA(Sec) + L-serine + ATP = L-seryl-tRNA(Sec) + AMP + diphosphate + H(+). It participates in aminoacyl-tRNA biosynthesis; selenocysteinyl-tRNA(Sec) biosynthesis; L-seryl-tRNA(Sec) from L-serine and tRNA(Sec): step 1/1. Functionally, catalyzes the attachment of serine to tRNA(Ser). Is also able to aminoacylate tRNA(Sec) with serine, to form the misacylated tRNA L-seryl-tRNA(Sec), which will be further converted into selenocysteinyl-tRNA(Sec). This is Serine--tRNA ligase from Finegoldia magna (strain ATCC 29328 / DSM 20472 / WAL 2508) (Peptostreptococcus magnus).